Reading from the N-terminus, the 89-residue chain is Small ribosomal subunit protein uS15 (89 aa).

The protein belongs to the universal ribosomal protein uS15 family. Part of the 30S ribosomal subunit. Forms a bridge to the 50S subunit in the 70S ribosome, contacting the 23S rRNA.

One of the primary rRNA binding proteins, it binds directly to 16S rRNA where it helps nucleate assembly of the platform of the 30S subunit by binding and bridging several RNA helices of the 16S rRNA. Functionally, forms an intersubunit bridge (bridge B4) with the 23S rRNA of the 50S subunit in the ribosome. The protein is Small ribosomal subunit protein uS15 of Acinetobacter baylyi (strain ATCC 33305 / BD413 / ADP1).